The primary structure comprises 430 residues: Enolase (430 aa).

Position 167 (Q167) interacts with (2R)-2-phosphoglycerate. E209 serves as the catalytic Proton donor. Residues D246, E287, and D314 each coordinate Mg(2+). Residues K339, R368, S369, and K390 each contribute to the (2R)-2-phosphoglycerate site. The Proton acceptor role is filled by K339.

Belongs to the enolase family. Requires Mg(2+) as cofactor.

The protein localises to the cytoplasm. It is found in the secreted. Its subcellular location is the cell surface. It carries out the reaction (2R)-2-phosphoglycerate = phosphoenolpyruvate + H2O. The protein operates within carbohydrate degradation; glycolysis; pyruvate from D-glyceraldehyde 3-phosphate: step 4/5. Its function is as follows. Catalyzes the reversible conversion of 2-phosphoglycerate (2-PG) into phosphoenolpyruvate (PEP). It is essential for the degradation of carbohydrates via glycolysis. The protein is Enolase of Prochlorococcus marinus subsp. pastoris (strain CCMP1986 / NIES-2087 / MED4).